The primary structure comprises 244 residues: Small ribosomal subunit protein eS4 (244 aa).

Basic residues predominate over residues 1 to 14 (MANKGPRKHLKRLP). The tract at residues 1-36 (MANKGPRKHLKRLPAPKNWQISRKTNKYTTRPSAGP) is disordered. Polar residues predominate over residues 19–32 (WQISRKTNKYTTRP). One can recognise an S4 RNA-binding domain in the interval 43 to 106 (LPLLLVLRDL…NESFLVVLDE (64 aa)).

It belongs to the eukaryotic ribosomal protein eS4 family.

The polypeptide is Small ribosomal subunit protein eS4 (Methanococcus aeolicus (strain ATCC BAA-1280 / DSM 17508 / OCM 812 / Nankai-3)).